The following is a 228-amino-acid chain: Ribose-5-phosphate isomerase A (228 aa).

Substrate contacts are provided by residues 32–35, 85–88, and 98–101; these read TGST, DGAD, and KGGG. E107 (proton acceptor) is an active-site residue. K125 is a substrate binding site.

It belongs to the ribose 5-phosphate isomerase family. Homodimer.

The enzyme catalyses aldehydo-D-ribose 5-phosphate = D-ribulose 5-phosphate. The protein operates within carbohydrate degradation; pentose phosphate pathway; D-ribose 5-phosphate from D-ribulose 5-phosphate (non-oxidative stage): step 1/1. Catalyzes the reversible conversion of ribose-5-phosphate to ribulose 5-phosphate. The sequence is that of Ribose-5-phosphate isomerase A from Cupriavidus necator (strain ATCC 17699 / DSM 428 / KCTC 22496 / NCIMB 10442 / H16 / Stanier 337) (Ralstonia eutropha).